The following is a 64-amino-acid chain: UPF0434 protein Bcen_1934 (64 aa).

It belongs to the UPF0434 family.

This Burkholderia orbicola (strain AU 1054) protein is UPF0434 protein Bcen_1934.